A 283-amino-acid polypeptide reads, in one-letter code: Phosphatidylglycerol--prolipoprotein diacylglyceryl transferase (283 aa).

3 helical membrane passes run 14-34, 56-76, and 88-108; these read LGPL…ALFL, MLMY…VLFY, and IFMV…VLIA. Arginine 139 lines the a 1,2-diacyl-sn-glycero-3-phospho-(1'-sn-glycerol) pocket. The chain crosses the membrane as a helical span at residues 258–278; that stretch reads MGQWLSLPMIVIGVALLVFFG.

It belongs to the Lgt family.

The protein localises to the cell inner membrane. It carries out the reaction L-cysteinyl-[prolipoprotein] + a 1,2-diacyl-sn-glycero-3-phospho-(1'-sn-glycerol) = an S-1,2-diacyl-sn-glyceryl-L-cysteinyl-[prolipoprotein] + sn-glycerol 1-phosphate + H(+). The protein operates within protein modification; lipoprotein biosynthesis (diacylglyceryl transfer). In terms of biological role, catalyzes the transfer of the diacylglyceryl group from phosphatidylglycerol to the sulfhydryl group of the N-terminal cysteine of a prolipoprotein, the first step in the formation of mature lipoproteins. This is Phosphatidylglycerol--prolipoprotein diacylglyceryl transferase from Chromobacterium violaceum (strain ATCC 12472 / DSM 30191 / JCM 1249 / CCUG 213 / NBRC 12614 / NCIMB 9131 / NCTC 9757 / MK).